We begin with the raw amino-acid sequence, 251 residues long: Triosephosphate isomerase (251 aa).

Asn10 and Lys12 together coordinate substrate. The active-site Electrophile is His96. The active-site Proton acceptor is the Glu168.

This sequence belongs to the triosephosphate isomerase family. As to quaternary structure, homodimer.

The enzyme catalyses D-glyceraldehyde 3-phosphate = dihydroxyacetone phosphate. The protein operates within carbohydrate biosynthesis; gluconeogenesis. It participates in carbohydrate degradation; glycolysis; D-glyceraldehyde 3-phosphate from glycerone phosphate: step 1/1. The protein is Triosephosphate isomerase (tpiA) of Aspergillus oryzae (strain ATCC 42149 / RIB 40) (Yellow koji mold).